Reading from the N-terminus, the 283-residue chain is 4-diphosphocytidyl-2-C-methyl-D-erythritol kinase (283 aa).

Lys-10 is a catalytic residue. 99–109 (PMGGGLGGGSS) serves as a coordination point for ATP. Residue Asp-141 is part of the active site.

This sequence belongs to the GHMP kinase family. IspE subfamily. Homodimer.

The catalysed reaction is 4-CDP-2-C-methyl-D-erythritol + ATP = 4-CDP-2-C-methyl-D-erythritol 2-phosphate + ADP + H(+). Its pathway is isoprenoid biosynthesis; isopentenyl diphosphate biosynthesis via DXP pathway; isopentenyl diphosphate from 1-deoxy-D-xylulose 5-phosphate: step 3/6. In terms of biological role, catalyzes the phosphorylation of the position 2 hydroxy group of 4-diphosphocytidyl-2C-methyl-D-erythritol. The chain is 4-diphosphocytidyl-2-C-methyl-D-erythritol kinase from Shigella boydii serotype 18 (strain CDC 3083-94 / BS512).